A 377-amino-acid polypeptide reads, in one-letter code: Cytoplasmic tRNA 2-thiolation protein 1 (377 aa).

The protein belongs to the TtcA family. CTU1/NCS6/ATPBD3 subfamily.

The protein localises to the cytoplasm. It participates in tRNA modification; 5-methoxycarbonylmethyl-2-thiouridine-tRNA biosynthesis. Plays a central role in 2-thiolation of mcm(5)S(2)U at tRNA wobble positions of tRNA(Lys), tRNA(Glu) and tRNA(Gln). Directly binds tRNAs and probably acts by catalyzing adenylation of tRNAs, an intermediate required for 2-thiolation. It is unclear whether it acts as a sulfurtransferase that transfers sulfur from thiocarboxylated URM1 onto the uridine of tRNAs at wobble position. Prior mcm(5) tRNA modification by the elongator complex is required for 2-thiolation. May also be involved in protein urmylation. The protein is Cytoplasmic tRNA 2-thiolation protein 1 of Debaryomyces hansenii (strain ATCC 36239 / CBS 767 / BCRC 21394 / JCM 1990 / NBRC 0083 / IGC 2968) (Yeast).